Reading from the N-terminus, the 139-residue chain is MARTKSTVIARKVTGGKAPRKQIGSKAARKSAAPSNTSGGVKKPHRYKPGTVALREIRRYQKSTELLIRKLPFQRLVREIAQDFKTDLRFQSSAIGALQESVEAYLVSLFEDTNLCAIHAKRVTIQKKDIHLARRLRGE.

The disordered stretch occupies residues 1-48 (MARTKSTVIARKVTGGKAPRKQIGSKAARKSAAPSNTSGGVKKPHRYK). The residue at position 5 (K5) is an N6,N6,N6-trimethyllysine; alternate. K5 bears the N6,N6-dimethyllysine; alternate mark. Residues K5 and K12 each carry the N6-methyllysine; alternate modification. Residues K12, K17, K21, K26, K30, and K42 each carry the N6-acetyllysine; alternate modification. Residue K17 is modified to N6,N6-dimethyllysine; alternate. K21, K26, K30, and K42 each carry N6-methyllysine; alternate. Residues K30 and K42 each carry the N6,N6,N6-trimethyllysine; alternate modification. 2 positions are modified to N6,N6-dimethyllysine; alternate: K30 and K42. N6-acetyllysine is present on residues K62 and K70. K85 bears the N6,N6,N6-trimethyllysine; alternate mark. K85 is subject to N6,N6-dimethyllysine; alternate. An N6-methyllysine; alternate modification is found at K85.

Belongs to the histone H3 family. The nucleosome is a histone octamer containing two molecules each of H2A, H2B, H3 and H4 assembled in one H3-H4 heterotetramer and two H2A-H2B heterodimers. The octamer wraps approximately 147 bp of DNA. Mono-, di- and trimethylated by the COMPASS complex to form H3K4me1/2/3. H3K4me activates gene expression by regulating transcription elongation and plays a role in telomere length maintenance. H3K4me enrichment correlates with transcription levels, and occurs in a 5' to 3' gradient with H3K4me3 enrichment at the 5'-end of genes, shifting to H3K4me2 and then H3K4me1. Methylated by SET2 to form H3K36me. H3K36me represses gene expression. Methylated by DOT1 to form H3K79me. H3K79me is required for association of SIR proteins with telomeric regions and for telomeric silencing. The COMPASS-mediated formation of H3K4me2/3 and the DOT1-mediated formation of H3K79me require H2BK123ub1. Post-translationally, acetylation of histone H3 leads to transcriptional activation. Acetylated by GCN5 to form H3K14ac. H3K14ac can also be formed by ESA1. H3K56ac formation occurs predominantly in newly synthesized H3 molecules during G1, S and G2/M of the cell cycle and may be involved in DNA repair.

The protein localises to the nucleus. Its subcellular location is the chromosome. In terms of biological role, core component of nucleosome. Nucleosomes wrap and compact DNA into chromatin, limiting DNA accessibility to the cellular machineries which require DNA as a template. Histones thereby play a central role in transcription regulation, DNA repair, DNA replication and chromosomal stability. DNA accessibility is regulated via a complex set of post-translational modifications of histones, also called histone code, and nucleosome remodeling. The sequence is that of Histone H3 (HHT1) from Yarrowia lipolytica (strain CLIB 122 / E 150) (Yeast).